The chain runs to 386 residues: Succinate--CoA ligase [ADP-forming] subunit beta (386 aa).

One can recognise an ATP-grasp domain in the interval 9 to 244 (KEILRNFGVP…LDEEDPAEVE (236 aa)). ATP is bound by residues Lys-46, 53–55 (GRG), Glu-99, Ala-102, and Glu-107. 2 residues coordinate Mg(2+): Asn-199 and Asp-213. Substrate contacts are provided by residues Asn-264 and 321 to 323 (GIM).

The protein belongs to the succinate/malate CoA ligase beta subunit family. In terms of assembly, heterotetramer of two alpha and two beta subunits. Requires Mg(2+) as cofactor.

The catalysed reaction is succinate + ATP + CoA = succinyl-CoA + ADP + phosphate. It carries out the reaction GTP + succinate + CoA = succinyl-CoA + GDP + phosphate. It functions in the pathway carbohydrate metabolism; tricarboxylic acid cycle; succinate from succinyl-CoA (ligase route): step 1/1. Functionally, succinyl-CoA synthetase functions in the citric acid cycle (TCA), coupling the hydrolysis of succinyl-CoA to the synthesis of either ATP or GTP and thus represents the only step of substrate-level phosphorylation in the TCA. The beta subunit provides nucleotide specificity of the enzyme and binds the substrate succinate, while the binding sites for coenzyme A and phosphate are found in the alpha subunit. This chain is Succinate--CoA ligase [ADP-forming] subunit beta, found in Polaromonas naphthalenivorans (strain CJ2).